A 480-amino-acid polypeptide reads, in one-letter code: Uronate isomerase (480 aa).

This sequence belongs to the metallo-dependent hydrolases superfamily. Uronate isomerase family.

The catalysed reaction is D-glucuronate = D-fructuronate. The enzyme catalyses aldehydo-D-galacturonate = keto-D-tagaturonate. It functions in the pathway carbohydrate metabolism; pentose and glucuronate interconversion. The chain is Uronate isomerase from Phenylobacterium zucineum (strain HLK1).